The sequence spans 309 residues: MTDSLTHTSPFLVAALYHFVSVPRFADLQAPLQTLCEENGVKGTLLLAHEGINGTIAGPDAGIHAVLAFLRAQPEFSGLEHKESRASKMPFLRMKVKLKKEIVTMGVEDIDPNKVVGTYVAAKDWNTLISDPDTIVIDTRNDYETAIGTFRGALDPKTKSFREFPEWVRQNPGLHNKPKVAMYCTGGIRCEKATAFMKAEGFDEVYHLKGGILKYLEEVPQEESLWDGACFVFDERVSVEHGLKEGEHRLCHACRNPITAEETTSPLYEEGVSCSHCYHTRTEEDRLRYRQRQHQIALAKKRGQRHIGS.

The region spanning 130-224 is the Rhodanese domain; the sequence is SDPDTIVIDT…YLEEVPQEES (95 aa). The active-site Cysteine persulfide intermediate is the Cys184.

It belongs to the TrhO family.

The enzyme catalyses uridine(34) in tRNA + AH2 + O2 = 5-hydroxyuridine(34) in tRNA + A + H2O. Functionally, catalyzes oxygen-dependent 5-hydroxyuridine (ho5U) modification at position 34 in tRNAs. In Rhizobium johnstonii (strain DSM 114642 / LMG 32736 / 3841) (Rhizobium leguminosarum bv. viciae), this protein is tRNA uridine(34) hydroxylase.